The chain runs to 463 residues: L-seryl-tRNA(Sec) selenium transferase (463 aa).

K295 bears the N6-(pyridoxal phosphate)lysine mark.

The protein belongs to the SelA family. In terms of assembly, homodecamer; pentamer of dimers. Binds only one seryl-tRNA(Sec) per dimer. Pyridoxal 5'-phosphate is required as a cofactor.

It is found in the cytoplasm. It catalyses the reaction L-seryl-tRNA(Sec) + selenophosphate + H(+) = L-selenocysteinyl-tRNA(Sec) + phosphate. It participates in aminoacyl-tRNA biosynthesis; selenocysteinyl-tRNA(Sec) biosynthesis; selenocysteinyl-tRNA(Sec) from L-seryl-tRNA(Sec) (bacterial route): step 1/1. In terms of biological role, converts seryl-tRNA(Sec) to selenocysteinyl-tRNA(Sec) required for selenoprotein biosynthesis. The protein is L-seryl-tRNA(Sec) selenium transferase of Escherichia coli O6:H1 (strain CFT073 / ATCC 700928 / UPEC).